The primary structure comprises 2273 residues: Nonribosomal peptide synthetase hasD (2273 aa).

Residues 100–446 form an adenylation 1 region; the sequence is FHDQLQKHSS…AGLGLALGYF (347 aa). The Carrier 1 domain maps to 588 to 664; sequence ERGLGAVESV…NIAAAVVELS (77 aa). S625 carries the post-translational modification O-(pantetheine 4'-phosphoryl)serine. Residues 696 to 1120 form a condensation 1 region; that stretch reads IAPMTDMQTR…AAQPDTDLSN (425 aa). The interval 1156–1487 is adenylation 2; it reads ENSIQAHPDI…SGVQVTPGYL (332 aa). The Carrier 2 domain occupies 1634-1714; the sequence is DLETDTQRVL…DLSLAIDELV (81 aa). S1673 carries the O-(pantetheine 4'-phosphoryl)serine modification. The interval 1735 to 2127 is condensation 2; it reads GQLPLSYLEK…QDLEVDMEYD (393 aa). A disordered region spans residues 2174 to 2200; it reads PVGLTPSHEGSAELTNGTNKTDSTTGQ. A compositionally biased stretch (polar residues) spans 2186–2200; that stretch reads ELTNGTNKTDSTTGQ. The Carrier 3 domain maps to 2201-2273; that stretch reads QELENNLTDV…LELATCAVII (73 aa). The residue at position 2235 (S2235) is an O-(pantetheine 4'-phosphoryl)serine.

Belongs to the NRP synthetase family. Requires pantetheine 4'-phosphate as cofactor.

It participates in secondary metabolite biosynthesis. Nonribosomal peptide synthetase; part of the gene cluster that mediates the biosynthesis of hexadehydro-astechrome (HAS), a tryptophan-derived iron(III)-complex that acts as a virulence factor in infected mice. Within the pathway, the NRPS condenses tryptophan and alanine to produce the Trp-Ala dipeptide. The 7-dimethylallyltryptophan synthase hasE then catalyzes the prenylation of the hasD-tethered tryptophan or the resulting tethered Trp-Ala dipeptide at the C-7 position of the indole moiety. HAS biosynthesis continues via tethered intermediates with the succesive actions of the cytochrome P450 monooxygenase hasH, the O-methyltransferase hasC, and the FAD-linked oxidoreductase hasG. The resulting O-methylated diketopiperazine is then released from hasD. Finally, three O-methylated diketopiperazine molecules assemble in a trimeric complex with Fe(III) to produce hexadehydro-astechrome. The sequence is that of Nonribosomal peptide synthetase hasD from Aspergillus fumigatus (strain CBS 144.89 / FGSC A1163 / CEA10) (Neosartorya fumigata).